A 198-amino-acid polypeptide reads, in one-letter code: Molybdenum cofactor guanylyltransferase (198 aa).

Residues 14–16 (LAG), Lys-27, Asp-73, and Asp-103 contribute to the GTP site. Residue Asp-103 participates in Mg(2+) binding.

Belongs to the MobA family. As to quaternary structure, monomer. Mg(2+) serves as cofactor.

Its subcellular location is the cytoplasm. The catalysed reaction is Mo-molybdopterin + GTP + H(+) = Mo-molybdopterin guanine dinucleotide + diphosphate. Functionally, transfers a GMP moiety from GTP to Mo-molybdopterin (Mo-MPT) cofactor (Moco or molybdenum cofactor) to form Mo-molybdopterin guanine dinucleotide (Mo-MGD) cofactor. The protein is Molybdenum cofactor guanylyltransferase of Pseudomonas aeruginosa (strain ATCC 15692 / DSM 22644 / CIP 104116 / JCM 14847 / LMG 12228 / 1C / PRS 101 / PAO1).